Here is a 362-residue protein sequence, read N- to C-terminus: sn-glycerol-3-phosphate import ATP-binding protein UgpC (362 aa).

Residues 4-235 form the ABC transporter domain; that stretch reads LSFRNVKKTY…PASTFVAGFI (232 aa). 37–44 provides a ligand contact to ATP; it reads GPSGCGKS.

Belongs to the ABC transporter superfamily. sn-glycerol-3-phosphate importer (TC 3.A.1.1.3) family. The complex is composed of two ATP-binding proteins (UgpC), two transmembrane proteins (UgpA and UgpE) and a solute-binding protein (UgpB).

It localises to the cell inner membrane. The enzyme catalyses sn-glycerol 3-phosphate(out) + ATP + H2O = sn-glycerol 3-phosphate(in) + ADP + phosphate + H(+). Its function is as follows. Part of the ABC transporter complex UgpBAEC involved in sn-glycerol-3-phosphate (G3P) import. Responsible for energy coupling to the transport system. This is sn-glycerol-3-phosphate import ATP-binding protein UgpC from Bordetella pertussis (strain Tohama I / ATCC BAA-589 / NCTC 13251).